Consider the following 100-residue polypeptide: NAD(P)H-quinone oxidoreductase subunit 4L, chloroplastic (100 aa).

3 helical membrane-spanning segments follow: residues 1–21, 31–51, and 60–80; these read MLEH…YGLI, MCLE…SDFF, and IFSI…PAIL.

It belongs to the complex I subunit 4L family. As to quaternary structure, NDH is composed of at least 16 different subunits, 5 of which are encoded in the nucleus.

It localises to the plastid. The protein resides in the chloroplast thylakoid membrane. The catalysed reaction is a plastoquinone + NADH + (n+1) H(+)(in) = a plastoquinol + NAD(+) + n H(+)(out). The enzyme catalyses a plastoquinone + NADPH + (n+1) H(+)(in) = a plastoquinol + NADP(+) + n H(+)(out). NDH shuttles electrons from NAD(P)H:plastoquinone, via FMN and iron-sulfur (Fe-S) centers, to quinones in the photosynthetic chain and possibly in a chloroplast respiratory chain. The immediate electron acceptor for the enzyme in this species is believed to be plastoquinone. Couples the redox reaction to proton translocation, and thus conserves the redox energy in a proton gradient. In Cucumis sativus (Cucumber), this protein is NAD(P)H-quinone oxidoreductase subunit 4L, chloroplastic.